The following is a 186-amino-acid chain: Ribosome-recycling factor (186 aa).

It belongs to the RRF family.

It is found in the cytoplasm. In terms of biological role, responsible for the release of ribosomes from messenger RNA at the termination of protein biosynthesis. May increase the efficiency of translation by recycling ribosomes from one round of translation to another. In Rhizobium leguminosarum bv. trifolii (strain WSM2304), this protein is Ribosome-recycling factor.